We begin with the raw amino-acid sequence, 238 residues long: Small ribosomal subunit protein uS2c (238 aa).

The protein belongs to the universal ribosomal protein uS2 family.

The protein resides in the plastid. Its subcellular location is the chloroplast. In Oltmannsiellopsis viridis (Marine flagellate), this protein is Small ribosomal subunit protein uS2c (rps2).